Here is a 569-residue protein sequence, read N- to C-terminus: Urease subunit alpha (569 aa).

Residues 131-569 (GAIDSHIHFI…LPLAQRYLLL (439 aa)) form the Urease domain. Ni(2+) is bound by residues histidine 136, histidine 138, and lysine 219. Residue lysine 219 is modified to N6-carboxylysine. Histidine 221 provides a ligand contact to substrate. The Ni(2+) site is built by histidine 248 and histidine 274. Histidine 322 serves as the catalytic Proton donor. Residue aspartate 362 participates in Ni(2+) binding.

This sequence belongs to the metallo-dependent hydrolases superfamily. Urease alpha subunit family. In terms of assembly, heterotrimer of UreA (gamma), UreB (beta) and UreC (alpha) subunits. Three heterotrimers associate to form the active enzyme. It depends on Ni cation as a cofactor. In terms of processing, carboxylation allows a single lysine to coordinate two nickel ions.

It localises to the cytoplasm. It carries out the reaction urea + 2 H2O + H(+) = hydrogencarbonate + 2 NH4(+). It participates in nitrogen metabolism; urea degradation; CO(2) and NH(3) from urea (urease route): step 1/1. The polypeptide is Urease subunit alpha (Prochlorococcus marinus (strain NATL2A)).